A 536-amino-acid polypeptide reads, in one-letter code: Phosphoenolpyruvate carboxykinase (ATP) (536 aa).

3 residues coordinate substrate: R61, Y195, and K201. Residues K201, H220, and 236–244 (GLSGTGKTT) each bind ATP. Mn(2+)-binding residues include K201 and H220. D257 contacts Mn(2+). Residues E285, R322, and T447 each contribute to the ATP site. Residue R322 participates in substrate binding.

Belongs to the phosphoenolpyruvate carboxykinase (ATP) family. Mn(2+) serves as cofactor.

The protein resides in the cytoplasm. It catalyses the reaction oxaloacetate + ATP = phosphoenolpyruvate + ADP + CO2. Its pathway is carbohydrate biosynthesis; gluconeogenesis. Involved in the gluconeogenesis. Catalyzes the conversion of oxaloacetate (OAA) to phosphoenolpyruvate (PEP) through direct phosphoryl transfer between the nucleoside triphosphate and OAA. The chain is Phosphoenolpyruvate carboxykinase (ATP) from Rhizobium leguminosarum bv. trifolii (strain WSM2304).